The primary structure comprises 323 residues: tRNA dimethylallyltransferase (323 aa).

An ATP-binding site is contributed by 12 to 19 (GPTAAGKT). 14–19 (TAAGKT) serves as a coordination point for substrate. 2 interaction with substrate tRNA regions span residues 37–40 (DSAL) and 161–165 (QRLIR).

The protein belongs to the IPP transferase family. Monomer. It depends on Mg(2+) as a cofactor.

The enzyme catalyses adenosine(37) in tRNA + dimethylallyl diphosphate = N(6)-dimethylallyladenosine(37) in tRNA + diphosphate. Catalyzes the transfer of a dimethylallyl group onto the adenine at position 37 in tRNAs that read codons beginning with uridine, leading to the formation of N6-(dimethylallyl)adenosine (i(6)A). This Pseudomonas putida (strain ATCC 47054 / DSM 6125 / CFBP 8728 / NCIMB 11950 / KT2440) protein is tRNA dimethylallyltransferase.